The following is a 512-amino-acid chain: 2-isopropylmalate synthase (512 aa).

One can recognise a Pyruvate carboxyltransferase domain in the interval 5 to 268; that stretch reads LIIFDTTLRD…DLNIDTTHIV (264 aa). Mn(2+) is bound by residues aspartate 14, histidine 202, histidine 204, and asparagine 239. The regulatory domain stretch occupies residues 394-512; the sequence is AFVSLSQHSE…SQAEKVAAQG (119 aa).

The protein belongs to the alpha-IPM synthase/homocitrate synthase family. LeuA type 1 subfamily. In terms of assembly, homodimer. It depends on Mn(2+) as a cofactor.

It localises to the cytoplasm. The enzyme catalyses 3-methyl-2-oxobutanoate + acetyl-CoA + H2O = (2S)-2-isopropylmalate + CoA + H(+). The protein operates within amino-acid biosynthesis; L-leucine biosynthesis; L-leucine from 3-methyl-2-oxobutanoate: step 1/4. Functionally, catalyzes the condensation of the acetyl group of acetyl-CoA with 3-methyl-2-oxobutanoate (2-ketoisovalerate) to form 3-carboxy-3-hydroxy-4-methylpentanoate (2-isopropylmalate). This Variovorax paradoxus (strain S110) protein is 2-isopropylmalate synthase.